We begin with the raw amino-acid sequence, 211 residues long: Interleukin-6 (211 aa).

Residues 1-29 (MNSLSTSAFSPVAFSLGLLLVMATAFPTP) form the signal peptide. Residues cysteine 71 and cysteine 77 are joined by a disulfide bond. Position 80 is a phosphoserine (serine 80). The cysteines at positions 100 and 110 are disulfide-linked.

Belongs to the IL-6 superfamily. Component of a hexamer of two molecules each of IL6, IL6R and IL6ST; first binds to IL6R to associate with the signaling subunit IL6ST. Interacts with IL6R (via the N-terminal ectodomain); this interaction may be affected by IL6R-binding with SORL1, hence decreasing IL6 cis signaling. Interacts with SORL1 (via the N-terminal ectodomain); this interaction leads to IL6 internalization and lysosomal degradation. May form a trimeric complex with the soluble SORL1 ectodomain and soluble IL6R receptor; this interaction might stabilize circulating IL6, hence promoting IL6 trans signaling.

It is found in the secreted. Functionally, cytokine with a wide variety of biological functions in immunity, tissue regeneration, and metabolism. Binds to IL6R, then the complex associates to the signaling subunit IL6ST/gp130 to trigger the intracellular IL6-signaling pathway. The interaction with the membrane-bound IL6R and IL6ST stimulates 'classic signaling', whereas the binding of IL6 and soluble IL6R to IL6ST stimulates 'trans-signaling'. Alternatively, 'cluster signaling' occurs when membrane-bound IL6:IL6R complexes on transmitter cells activate IL6ST receptors on neighboring receiver cells. Its function is as follows. IL6 is a potent inducer of the acute phase response. Rapid production of IL6 contributes to host defense during infection and tissue injury, but excessive IL6 synthesis is involved in disease pathology. In the innate immune response, is synthesized by myeloid cells, such as macrophages and dendritic cells, upon recognition of pathogens through toll-like receptors (TLRs) at the site of infection or tissue injury. In the adaptive immune response, is required for the differentiation of B cells into immunoglobulin-secreting cells. Plays a major role in the differentiation of CD4(+) T cell subsets. Essential factor for the development of T follicular helper (Tfh) cells that are required for the induction of germinal-center formation. Required to drive naive CD4(+) T cells to the Th17 lineage. Also required for proliferation of myeloma cells and the survival of plasmablast cells. In terms of biological role, acts as an essential factor in bone homeostasis and on vessels directly or indirectly by induction of VEGF, resulting in increased angiogenesis activity and vascular permeability. Induces, through 'trans-signaling' and synergistically with IL1B and TNF, the production of VEGF. Involved in metabolic controls, is discharged into the bloodstream after muscle contraction increasing lipolysis and improving insulin resistance. 'Trans-signaling' in central nervous system also regulates energy and glucose homeostasis. Mediates, through GLP-1, crosstalk between insulin-sensitive tissues, intestinal L cells and pancreatic islets to adapt to changes in insulin demand. Also acts as a myokine. Plays a protective role during liver injury, being required for maintenance of tissue regeneration. Also has a pivotal role in iron metabolism by regulating HAMP/hepcidin expression upon inflammation or bacterial infection. Through activation of IL6ST-YAP-NOTCH pathway, induces inflammation-induced epithelial regeneration. The chain is Interleukin-6 (IL6) from Camelus bactrianus (Bactrian camel).